A 143-amino-acid chain; its full sequence is Hemoglobin subunit alpha (143 aa).

An N-acetylserine modification is found at S2. A Globin domain is found at 2 to 143; it reads SLSDKDKSAV…VALALAEKYR (142 aa). H60 is an O2 binding site. H89 lines the heme b pocket.

The protein belongs to the globin family. As to quaternary structure, heterotetramer of two alpha chains and two beta chains. Red blood cells.

In terms of biological role, involved in oxygen transport from gills to the various peripheral tissues. This chain is Hemoglobin subunit alpha (hba), found in Pogonophryne scotti (Saddleback plunderfish).